Here is a 302-residue protein sequence, read N- to C-terminus: Pyridoxal kinase (302 aa).

Positions 10, 45, and 122 each coordinate substrate. ATP is bound by residues 181-182 and 215-227; these read TS and VGPK…TGTG. Asp228 is a binding site for substrate.

It belongs to the pyridoxine kinase family. In terms of assembly, homodimer. The cofactor is a divalent metal cation.

It is found in the cytoplasm. The catalysed reaction is pyridoxal + ATP = pyridoxal 5'-phosphate + ADP + H(+). It participates in cofactor metabolism; pyridoxal 5'-phosphate salvage; pyridoxal 5'-phosphate from pyridoxal: step 1/1. Its function is as follows. Required for synthesis of pyridoxal-5-phosphate from vitamin B6. The chain is Pyridoxal kinase (pykA) from Dictyostelium discoideum (Social amoeba).